A 432-amino-acid polypeptide reads, in one-letter code: Neuropeptide FF receptor 1 (432 aa).

Over 1 to 43 the chain is Extracellular; the sequence is MEAEPSQPPNGSWPLGQNGSDVETSMATSLTFSSYYQHSSPVA. Residues asparagine 10 and asparagine 18 are each glycosylated (N-linked (GlcNAc...) asparagine). Residues 44-64 traverse the membrane as a helical segment; the sequence is AMFIAAYVLIFLLCMVGNTLV. Topologically, residues 65–80 are cytoplasmic; the sequence is CFIVLKNRHMRTVTNM. The chain crosses the membrane as a helical span at residues 81-101; it reads FILNLAVSDLLVGIFCMPTTL. At 102-117 the chain is on the extracellular side; it reads VDNLITGWPFDNATCK. An N-linked (GlcNAc...) asparagine glycan is attached at asparagine 113. Cysteines 116 and 203 form a disulfide. Residues 118-138 traverse the membrane as a helical segment; it reads MSGLVQGMSVSASVFTLVAIA. The Cytoplasmic portion of the chain corresponds to 139 to 158; sequence VERFRCIVHPFREKLTLRKA. Residues 159-179 form a helical membrane-spanning segment; sequence LFTIAVIWALALLIMCPSAVT. Over 180–214 the chain is Extracellular; it reads LTVTREEHHFMLDARNRSYPLYSCWEAWPEKGMRK. A glycan (N-linked (GlcNAc...) asparagine) is linked at asparagine 195. Residues 215 to 235 form a helical membrane-spanning segment; that stretch reads VYTAVLFAHIYLVPLALIVVM. At 236–273 the chain is on the cytoplasmic side; the sequence is YVRIARKLCQAPGPARDTEEAVAEGGRTSRRRARVVHM. A helical membrane pass occupies residues 274–294; the sequence is LVMVALFFTLSWLPLWVLLLL. The Extracellular segment spans residues 295–309; sequence IDYGELSELQLHLLS. Residues 310–330 form a helical membrane-spanning segment; sequence VYAFPLAHWLAFFHSSANPII. At 331 to 432 the chain is on the cytoplasmic side; sequence YGYFNENFRR…MPLTIPAWNI (102 aa). A compositionally biased stretch (low complexity) spans 380 to 406; that stretch reads PSDSGLPSESGPSSGVPGPGRLPLRNG. The disordered stretch occupies residues 380–422; that stretch reads PSDSGLPSESGPSSGVPGPGRLPLRNGRVAHQDGPGEGPGCNH.

This sequence belongs to the G-protein coupled receptor 1 family. In terms of tissue distribution, expressed at high levels in the hypothalamus. Moderate levels found in the midbrain, thalamus, medulla oblongata, testis, eye, whole brain, cerebral cortex, striatum, hippocampus, cerebellum, optic nerve, placenta, spinal cord, pituitary gland and ovary.

The protein resides in the cell membrane. Receptor for NPAF (A-18-F-amide) and NPFF (F-8-F-amide) neuropeptides, also known as morphine-modulating peptides. Can also be activated by a variety of naturally occurring or synthetic FMRF-amide like ligands. This receptor mediates its action by association with G proteins that activate a phosphatidylinositol-calcium second messenger system. The polypeptide is Neuropeptide FF receptor 1 (Npffr1) (Rattus norvegicus (Rat)).